We begin with the raw amino-acid sequence, 395 residues long: E3 ubiquitin-protein ligase NHLRC1 (395 aa).

The segment at 26–72 (CKVCFEKFGHRQQRRPRNLSCGHVVCLACVAALAHPRTLALECPFCR) adopts an RING-type zinc-finger fold. NHL repeat units follow at residues 113–157 (ALTC…FDSG), 161–204 (AHQF…FDFF), 205–245 (GQIK…LDVD), 248–300 (EGVL…FSSS), 301–349 (MQLV…LGKP), and 350–393 (EEFP…YKVD).

In terms of assembly, interacts with AGL. Interacts (via the NHL repeats) with EPM2A/laforin. Forms a complex with EPM2A/laforin and HSP70. Interacts with PRDM8. Expressed in brain, cerebellum, spinal cord, medulla, heart, liver, skeletal muscle and pancreas.

It localises to the endoplasmic reticulum. Its subcellular location is the nucleus. It catalyses the reaction S-ubiquitinyl-[E2 ubiquitin-conjugating enzyme]-L-cysteine + [acceptor protein]-L-lysine = [E2 ubiquitin-conjugating enzyme]-L-cysteine + N(6)-ubiquitinyl-[acceptor protein]-L-lysine.. It participates in protein modification; protein ubiquitination. In terms of biological role, E3 ubiquitin-protein ligase. Together with the phosphatase EPM2A/laforin, appears to be involved in the clearance of toxic polyglucosan and protein aggregates via multiple pathways. In complex with EPM2A/laforin and HSP70, suppresses the cellular toxicity of misfolded proteins by promoting their degradation through the ubiquitin-proteasome system (UPS). Ubiquitinates the glycogen-targeting protein phosphatase subunits PPP1R3C/PTG and PPP1R3D in a laforin-dependent manner and targets them for proteasome-dependent degradation, thus decreasing glycogen accumulation. Polyubiquitinates EPM2A/laforin and ubiquitinates AGL and targets them for proteasome-dependent degradation. Also promotes proteasome-independent protein degradation through the macroautophagy pathway. This is E3 ubiquitin-protein ligase NHLRC1 (NHLRC1) from Homo sapiens (Human).